A 220-amino-acid chain; its full sequence is Deoxyribose-phosphate aldolase 1 (220 aa).

Asp-89 (proton donor/acceptor) is an active-site residue. Residue Lys-151 is the Schiff-base intermediate with acetaldehyde of the active site. Lys-180 functions as the Proton donor/acceptor in the catalytic mechanism.

Belongs to the DeoC/FbaB aldolase family. DeoC type 1 subfamily.

Its subcellular location is the cytoplasm. The enzyme catalyses 2-deoxy-D-ribose 5-phosphate = D-glyceraldehyde 3-phosphate + acetaldehyde. Its pathway is carbohydrate degradation; 2-deoxy-D-ribose 1-phosphate degradation; D-glyceraldehyde 3-phosphate and acetaldehyde from 2-deoxy-alpha-D-ribose 1-phosphate: step 2/2. Functionally, catalyzes a reversible aldol reaction between acetaldehyde and D-glyceraldehyde 3-phosphate to generate 2-deoxy-D-ribose 5-phosphate. The protein is Deoxyribose-phosphate aldolase 1 of Mesoplasma florum (strain ATCC 33453 / NBRC 100688 / NCTC 11704 / L1) (Acholeplasma florum).